Reading from the N-terminus, the 419-residue chain is 3-isopropylmalate dehydratase large subunit (419 aa).

The [4Fe-4S] cluster site is built by C300, C360, and C363.

The protein belongs to the aconitase/IPM isomerase family. LeuC type 2 subfamily. Heterodimer of LeuC and LeuD. Requires [4Fe-4S] cluster as cofactor.

The enzyme catalyses (2R,3S)-3-isopropylmalate = (2S)-2-isopropylmalate. It functions in the pathway amino-acid biosynthesis; L-leucine biosynthesis; L-leucine from 3-methyl-2-oxobutanoate: step 2/4. Its function is as follows. Catalyzes the isomerization between 2-isopropylmalate and 3-isopropylmalate, via the formation of 2-isopropylmaleate. This chain is 3-isopropylmalate dehydratase large subunit, found in Nitratidesulfovibrio vulgaris (strain ATCC 29579 / DSM 644 / CCUG 34227 / NCIMB 8303 / VKM B-1760 / Hildenborough) (Desulfovibrio vulgaris).